Reading from the N-terminus, the 347-residue chain is Protein RecA (347 aa).

64 to 71 serves as a coordination point for ATP; the sequence is GPESSGKT.

The protein belongs to the RecA family.

The protein resides in the cytoplasm. Its function is as follows. Can catalyze the hydrolysis of ATP in the presence of single-stranded DNA, the ATP-dependent uptake of single-stranded DNA by duplex DNA, and the ATP-dependent hybridization of homologous single-stranded DNAs. It interacts with LexA causing its activation and leading to its autocatalytic cleavage. The protein is Protein RecA of Bartonella tribocorum (strain CIP 105476 / IBS 506).